Reading from the N-terminus, the 173-residue chain is Pathogenesis-related protein 1A/1B (173 aa).

Residues 1–20 (MSTSAVLFLLLAVFAAGASA) form the signal peptide.

The protein belongs to the thaumatin family.

This chain is Pathogenesis-related protein 1A/1B, found in Hordeum vulgare (Barley).